The primary structure comprises 1083 residues: uncharacterized protein (1083 aa).

The disordered stretch occupies residues 93–145; it reads SKGNLRYVPTTSRNPSNTDTYSSSIDISSSSSSINTSDDSSGKTSSNDLSDMS. The segment covering 108–145 has biased composition (low complexity); the sequence is SNTDTYSSSIDISSSSSSINTSDDSSGKTSSNDLSDMS.

It localises to the virion. This is an uncharacterized protein from Acanthamoeba polyphaga (Amoeba).